We begin with the raw amino-acid sequence, 738 residues long: 1,4-alpha-glucan branching enzyme GlgB (738 aa).

The active-site Nucleophile is Asp-399. Glu-452 acts as the Proton donor in catalysis.

It belongs to the glycosyl hydrolase 13 family. GlgB subfamily. As to quaternary structure, monomer.

The catalysed reaction is Transfers a segment of a (1-&gt;4)-alpha-D-glucan chain to a primary hydroxy group in a similar glucan chain.. It participates in glycan biosynthesis; glycogen biosynthesis. Functionally, catalyzes the formation of the alpha-1,6-glucosidic linkages in glycogen by scission of a 1,4-alpha-linked oligosaccharide from growing alpha-1,4-glucan chains and the subsequent attachment of the oligosaccharide to the alpha-1,6 position. In Chlamydia trachomatis serovar L2b (strain UCH-1/proctitis), this protein is 1,4-alpha-glucan branching enzyme GlgB.